A 290-amino-acid polypeptide reads, in one-letter code: MKNTFSRLFGFGDKESEFELQDESHEEIDKKVYEEIQEIPIVNITPNRYQPRTVFDDARIEELALTIRTHGLIQPIVVRQYEDEKYEIIAGERRFRAATKLGWEKVPAIIKNLNDTETASVALIENLQREELTAIEEAVAYQKLIELHNLTQEALAQRLGKGQSTIANKLRLLKLPEEIKNALLEKSITERHARALIPLKNEELQLKVLQEIVEKQLNVKQTEERIAKLLEEAKPKRKAKQKAVSRDTRIAMNTIRQSLQMVADSGLNVNSEEEEFDEYYQITIQIPKKK.

The H-T-H motif DNA-binding region spans 153-172 (EALAQRLGKGQSTIANKLRL).

Belongs to the ParB family.

It localises to the cytoplasm. The protein resides in the nucleoid. Functionally, effects nucleoid occlusion by binding relatively nonspecifically to DNA and preventing the assembly of the division machinery in the vicinity of the nucleoid, especially under conditions that disturb the cell cycle. It helps to coordinate cell division and chromosome segregation by preventing the formation of the Z ring through the nucleoid, which would cause chromosome breakage. The sequence is that of Nucleoid occlusion protein from Bacillus cereus (strain AH187).